The sequence spans 258 residues: MADSLVHSLASSSQLEAFDSFEYAEELCTLGSEWIQEAGVLLNLTQNCVIVCLILFRRYCTLYPPRVPDLDAIVMACVSIGSKTTETPASVQDICNVVVYLKERFKDTNFEARGFIAHDLYSEEMYSSRNRLSNMELEVLRALNFDTHIVIPHKLAIHYLQTLQLIDNKKLLQITWNFLNDASRTRLCVLYPPFSLACGCIAMAARVIGMKLPKDWYRVFDTTKEEIDSLTSILENFYKTSAIAHKTLYLIFTEQVSA.

The 133-residue stretch at E16 to H148 folds into the Cyclin N-terminal domain.

The protein belongs to the cyclin family. Cyclin L subfamily.

The protein resides in the cytoplasm. The protein localises to the nucleus. This is an uncharacterized protein from Schizosaccharomyces pombe (strain 972 / ATCC 24843) (Fission yeast).